A 454-amino-acid chain; its full sequence is Chromosomal replication initiator protein DnaA (454 aa).

Positions Met-1–Ala-83 are domain I, interacts with DnaA modulators. The segment at Ala-83–Ser-113 is domain II. The interval Asp-114 to Ala-332 is domain III, AAA+ region. ATP-binding residues include Gly-158, Gly-160, Lys-161, and Thr-162. A domain IV, binds dsDNA region spans residues Asn-333–Lys-454.

This sequence belongs to the DnaA family. As to quaternary structure, oligomerizes as a right-handed, spiral filament on DNA at oriC.

The protein resides in the cytoplasm. Plays an essential role in the initiation and regulation of chromosomal replication. ATP-DnaA binds to the origin of replication (oriC) to initiate formation of the DNA replication initiation complex once per cell cycle. Binds the DnaA box (a 9 base pair repeat at the origin) and separates the double-stranded (ds)DNA. Forms a right-handed helical filament on oriC DNA; dsDNA binds to the exterior of the filament while single-stranded (ss)DNA is stabiized in the filament's interior. The ATP-DnaA-oriC complex binds and stabilizes one strand of the AT-rich DNA unwinding element (DUE), permitting loading of DNA polymerase. After initiation quickly degrades to an ADP-DnaA complex that is not apt for DNA replication. Binds acidic phospholipids. This chain is Chromosomal replication initiator protein DnaA, found in Streptococcus thermophilus (strain ATCC BAA-250 / LMG 18311).